A 227-amino-acid chain; its full sequence is Cytochrome c oxidase subunit 2 (227 aa).

Residues 1-14 (MAYPVQLGFQDAAS) lie on the Mitochondrial intermembrane side of the membrane. The chain crosses the membrane as a helical span at residues 15 to 45 (PIMEELLYFHDHTLMIMFLISSLVLYIISLM). Residues 46-59 (LTTELIHTSTMDAQ) lie on the Mitochondrial matrix side of the membrane. The chain crosses the membrane as a helical span at residues 60 to 87 (EVETVWTILPAVILILIALPSLRILYMM). Residues 88–227 (DEISTPSLTL…HFEEWLLSML (140 aa)) lie on the Mitochondrial intermembrane side of the membrane. His161, Cys196, Glu198, Cys200, His204, and Met207 together coordinate Cu cation. Position 198 (Glu198) interacts with Mg(2+).

This sequence belongs to the cytochrome c oxidase subunit 2 family. Component of the cytochrome c oxidase (complex IV, CIV), a multisubunit enzyme composed of 14 subunits. The complex is composed of a catalytic core of 3 subunits MT-CO1, MT-CO2 and MT-CO3, encoded in the mitochondrial DNA, and 11 supernumerary subunits COX4I, COX5A, COX5B, COX6A, COX6B, COX6C, COX7A, COX7B, COX7C, COX8 and NDUFA4, which are encoded in the nuclear genome. The complex exists as a monomer or a dimer and forms supercomplexes (SCs) in the inner mitochondrial membrane with NADH-ubiquinone oxidoreductase (complex I, CI) and ubiquinol-cytochrome c oxidoreductase (cytochrome b-c1 complex, complex III, CIII), resulting in different assemblies (supercomplex SCI(1)III(2)IV(1) and megacomplex MCI(2)III(2)IV(2)). Found in a complex with TMEM177, COA6, COX18, COX20, SCO1 and SCO2. Interacts with TMEM177 in a COX20-dependent manner. Interacts with COX20. Interacts with COX16. Requires Cu cation as cofactor.

It is found in the mitochondrion inner membrane. The enzyme catalyses 4 Fe(II)-[cytochrome c] + O2 + 8 H(+)(in) = 4 Fe(III)-[cytochrome c] + 2 H2O + 4 H(+)(out). In terms of biological role, component of the cytochrome c oxidase, the last enzyme in the mitochondrial electron transport chain which drives oxidative phosphorylation. The respiratory chain contains 3 multisubunit complexes succinate dehydrogenase (complex II, CII), ubiquinol-cytochrome c oxidoreductase (cytochrome b-c1 complex, complex III, CIII) and cytochrome c oxidase (complex IV, CIV), that cooperate to transfer electrons derived from NADH and succinate to molecular oxygen, creating an electrochemical gradient over the inner membrane that drives transmembrane transport and the ATP synthase. Cytochrome c oxidase is the component of the respiratory chain that catalyzes the reduction of oxygen to water. Electrons originating from reduced cytochrome c in the intermembrane space (IMS) are transferred via the dinuclear copper A center (CU(A)) of subunit 2 and heme A of subunit 1 to the active site in subunit 1, a binuclear center (BNC) formed by heme A3 and copper B (CU(B)). The BNC reduces molecular oxygen to 2 water molecules using 4 electrons from cytochrome c in the IMS and 4 protons from the mitochondrial matrix. The protein is Cytochrome c oxidase subunit 2 (MT-CO2) of Eulemur macaco (Black lemur).